Here is a 135-residue protein sequence, read N- to C-terminus: Large ribosomal subunit protein uL16c (135 aa).

It belongs to the universal ribosomal protein uL16 family. In terms of assembly, part of the 50S ribosomal subunit.

It is found in the plastid. It localises to the chloroplast. The sequence is that of Large ribosomal subunit protein uL16c from Panax ginseng (Korean ginseng).